The primary structure comprises 308 residues: Probable manganese-dependent inorganic pyrophosphatase (308 aa).

Mn(2+)-binding residues include His9, Asp13, Asp15, Asp75, His97, and Asp149.

It belongs to the PPase class C family. The cofactor is Mn(2+).

Its subcellular location is the cytoplasm. It catalyses the reaction diphosphate + H2O = 2 phosphate + H(+). The sequence is that of Probable manganese-dependent inorganic pyrophosphatase from Enterococcus faecalis (strain ATCC 700802 / V583).